A 652-amino-acid polypeptide reads, in one-letter code: Leucine-rich repeat-containing protein 4 (652 aa).

The signal sequence occupies residues 1 to 40 (MKLLWQVTVHHTWNAVLLPVVYLTAQVWILCAAIAAAASA). Residues 41–74 (GPQNCPSVCSCSNQFSKVVCTRRGLSEVPQGIPS) enclose the LRRNT domain. Residues 41-526 (GPQNCPSVCS…SLDEVMKTTK (486 aa)) are Extracellular-facing. Cystine bridges form between Cys45/Cys51 and Cys49/Cys60. LRR repeat units follow at residues 75–96 (NTRY…TFRH), 99–120 (HLEV…AFNG), 123–144 (SLNT…AFEY), 147–168 (KLRE…AFNR), 171–193 (SLMR…AFEG), 196–217 (NLKY…TPLV), 218–239 (GLEE…SFHG), 242–263 (SLKK…AFDG), and 266–287 (SLVE…LFTP). N-linked (GlcNAc...) asparagine glycans are attached at residues Asn276, Asn321, Asn362, Asn387, Asn409, Asn433, Asn439, and Asn449. Residues 299-351 (NPWNCDCDILWLAWWLREYIPTNSTCCGRCHAPMHMRGRYLVEVDQAAFQCSA) enclose the LRRCT domain. Intrachain disulfides connect Cys303/Cys328 and Cys305/Cys349. An Ig-like domain is found at 352–441 (PFIMDAPRDL…SNASAYLNVS (90 aa)). Cysteines 373 and 423 form a disulfide. Residues 527-547 (IIIGCFVAVTLLAAAMLIVFY) form a helical membrane-spanning segment. Topologically, residues 548–652 (KLRKRHQQRS…TKDKVQETQI (105 aa)) are cytoplasmic.

In terms of assembly, interacts (via LRR repeats) with NTNG2. Interacts with DLG4. Forms a complex with DLG4 and with NMDA receptors. In terms of processing, N-glycosylated. As to expression, specifically expressed in brain. In the hippocampus, parietal cortex and piriform cortex expressed in proximal segments of CA1 pyramidal neurons.

The protein resides in the membrane. Its subcellular location is the postsynaptic cell membrane. In terms of biological role, synaptic adhesion protein. Regulates the formation of exitatory synapses through the recruitment of pre-and-postsynaptic proteins. Organize the lamina/pathway-specific differentiation of dendrites. Plays an important role for auditory synaptic responses. Involved in the suppression of glioma. The polypeptide is Leucine-rich repeat-containing protein 4 (Lrrc4) (Mus musculus (Mouse)).